Consider the following 405-residue polypeptide: Formate-dependent phosphoribosylglycinamide formyltransferase (405 aa).

Residues 27–28 and Glu-87 each bind N(1)-(5-phospho-beta-D-ribosyl)glycinamide; that span reads EL. Residues Arg-120, Lys-162, 167–172, 202–205, and Glu-210 each bind ATP; these read SSGKGQ and EGFI. The 196-residue stretch at 125–320 folds into the ATP-grasp domain; it reads RLAAETLGLP…EFELHARALL (196 aa). Glu-279 and Glu-291 together coordinate Mg(2+). N(1)-(5-phospho-beta-D-ribosyl)glycinamide contacts are provided by residues Asp-298, Lys-367, and 374–375; that span reads RR.

Belongs to the PurK/PurT family. As to quaternary structure, homodimer.

It catalyses the reaction N(1)-(5-phospho-beta-D-ribosyl)glycinamide + formate + ATP = N(2)-formyl-N(1)-(5-phospho-beta-D-ribosyl)glycinamide + ADP + phosphate + H(+). It participates in purine metabolism; IMP biosynthesis via de novo pathway; N(2)-formyl-N(1)-(5-phospho-D-ribosyl)glycinamide from N(1)-(5-phospho-D-ribosyl)glycinamide (formate route): step 1/1. Functionally, involved in the de novo purine biosynthesis. Catalyzes the transfer of formate to 5-phospho-ribosyl-glycinamide (GAR), producing 5-phospho-ribosyl-N-formylglycinamide (FGAR). Formate is provided by PurU via hydrolysis of 10-formyl-tetrahydrofolate. The polypeptide is Formate-dependent phosphoribosylglycinamide formyltransferase (Bordetella avium (strain 197N)).